Reading from the N-terminus, the 489-residue chain is Ribulose bisphosphate carboxylase large chain (489 aa).

Substrate-binding residues include Asn128 and Thr178. The Proton acceptor role is filled by Lys180. Lys182 lines the substrate pocket. Positions 206, 208, and 209 each coordinate Mg(2+). Position 206 is an N6-carboxylysine (Lys206). His298 (proton acceptor) is an active-site residue. Substrate is bound by residues Arg299, His331, and Ser383.

It belongs to the RuBisCO large chain family. Type I subfamily. In terms of assembly, heterohexadecamer of 8 large chains and 8 small chains. It depends on Mg(2+) as a cofactor.

The enzyme catalyses 2 (2R)-3-phosphoglycerate + 2 H(+) = D-ribulose 1,5-bisphosphate + CO2 + H2O. It catalyses the reaction D-ribulose 1,5-bisphosphate + O2 = 2-phosphoglycolate + (2R)-3-phosphoglycerate + 2 H(+). In terms of biological role, ruBisCO catalyzes two reactions: the carboxylation of D-ribulose 1,5-bisphosphate, the primary event in carbon dioxide fixation, as well as the oxidative fragmentation of the pentose substrate. Both reactions occur simultaneously and in competition at the same active site. The chain is Ribulose bisphosphate carboxylase large chain from Nitrosospira sp. (strain 40KI).